A 291-amino-acid chain; its full sequence is Porphobilinogen deaminase (291 aa).

Cysteine 238 is modified (S-(dipyrrolylmethanemethyl)cysteine).

It belongs to the HMBS family. Monomer. Dipyrromethane is required as a cofactor.

The enzyme catalyses 4 porphobilinogen + H2O = hydroxymethylbilane + 4 NH4(+). It functions in the pathway porphyrin-containing compound metabolism; protoporphyrin-IX biosynthesis; coproporphyrinogen-III from 5-aminolevulinate: step 2/4. In terms of biological role, tetrapolymerization of the monopyrrole PBG into the hydroxymethylbilane pre-uroporphyrinogen in several discrete steps. This chain is Porphobilinogen deaminase, found in Clostridium beijerinckii (strain ATCC 51743 / NCIMB 8052) (Clostridium acetobutylicum).